The sequence spans 520 residues: Putative thymidine phosphorylase 1 (520 aa).

It belongs to the thymidine/pyrimidine-nucleoside phosphorylase family. Type 2 subfamily.

The enzyme catalyses thymidine + phosphate = 2-deoxy-alpha-D-ribose 1-phosphate + thymine. This chain is Putative thymidine phosphorylase 1, found in Cupriavidus necator (strain ATCC 17699 / DSM 428 / KCTC 22496 / NCIMB 10442 / H16 / Stanier 337) (Ralstonia eutropha).